Here is a 208-residue protein sequence, read N- to C-terminus: 2,3-bisphosphoglycerate-dependent phosphoglycerate mutase (208 aa).

Residues 9-16 (RHGQSEWN), 22-23 (TG), R61, 88-91 (ERDY), K99, 115-116 (RR), and 159-160 (GN) each bind substrate. H10 acts as the Tele-phosphohistidine intermediate in catalysis. Residue E88 is the Proton donor/acceptor of the active site.

It belongs to the phosphoglycerate mutase family. BPG-dependent PGAM subfamily. In terms of assembly, homodimer.

The catalysed reaction is (2R)-2-phosphoglycerate = (2R)-3-phosphoglycerate. Its pathway is carbohydrate degradation; glycolysis; pyruvate from D-glyceraldehyde 3-phosphate: step 3/5. Functionally, catalyzes the interconversion of 2-phosphoglycerate and 3-phosphoglycerate. This Methylobacterium sp. (strain 4-46) protein is 2,3-bisphosphoglycerate-dependent phosphoglycerate mutase.